Reading from the N-terminus, the 981-residue chain is Amidohydrolase tasK (981 aa).

The disordered stretch occupies residues 1–36 (MDDQKGPLPPYTPTATAPPPASMRQRRPPGRRRALR). Residues 7-21 (PLPPYTPTATAPPPA) are compositionally biased toward pro residues. Over residues 24-36 (RQRRPPGRRRALR) the composition is skewed to basic residues. A helical membrane pass occupies residues 40-57 (TVRVLALACLAFVVLAQW). A disordered region spans residues 86–107 (LRVRPQDPAGPGRSKNDRYLDG). Residues His-187 and His-189 each contribute to the Fe(2+) site. Residues His-187 and His-189 each coordinate Zn(2+). N-linked (GlcNAc...) asparagine glycosylation is present at Asn-407. A disordered region spans residues 819–838 (KKQQKQQQQQQQQQQQQHGT). Residues 823–835 (KQQQQQQQQQQQQ) are compositionally biased toward low complexity. Asn-891 carries an N-linked (GlcNAc...) asparagine glycan.

Belongs to the metallo-dependent hydrolases superfamily. The cofactor is Fe(2+). Requires Mn(2+) as cofactor. Zn(2+) serves as cofactor.

The protein localises to the membrane. Functionally, amidohydrolase; part of the gene cluster that mediates the biosynthesis of the tetramic acids Sch210971 and Sch210972, potential anti-HIV fungal natural product that contain a decalin core. The PKS module of tasS together with the enoylreductase tasC catalyze the formation of the polyketide unit which is then conjugated to 4-hydroxyl-4-methyl glutamate (HMG) by the condensation domain of the tasS NRPS module. One unique structural feature of Sch210971 and Sch210972 is the tetramic acid motif proposed to be derived from the non-proteinogenic amino acid HMG, by a Dieckmann-type condensation catalyzed by the reductase domain of tasS. The aldolase tasA catalyzes the aldol condensation of 2 molecules of pyruvic acid to yield the intermediate 4-hydroxyl-4-methyl-2-oxoglutarate (HMOG), which can then be stereoselectively transaminated, may be by tasG, to form HMG. The Diels-Alderase tas3 then uses the Dieckmann product of tasS as substrate and catalyzes the Diels-Alder cycloaddition to form the decalin ring of Sch210971 and Sch210972. The polypeptide is Amidohydrolase tasK (Hapsidospora irregularis).